Reading from the N-terminus, the 247-residue chain is tRNA (guanine-N(7)-)-methyltransferase (247 aa).

S-adenosyl-L-methionine-binding positions include glycine 70, 93–94, 128–129, and leucine 148; these read EI and NA. Aspartate 151 is a catalytic residue. 226-228 serves as a coordination point for S-adenosyl-L-methionine; that stretch reads SEE.

This sequence belongs to the class I-like SAM-binding methyltransferase superfamily. TrmB family.

Its subcellular location is the nucleus. The catalysed reaction is guanosine(46) in tRNA + S-adenosyl-L-methionine = N(7)-methylguanosine(46) in tRNA + S-adenosyl-L-homocysteine. The protein operates within tRNA modification; N(7)-methylguanine-tRNA biosynthesis. In terms of biological role, catalyzes the formation of N(7)-methylguanine at position 46 (m7G46) in tRNA. This Drosophila virilis (Fruit fly) protein is tRNA (guanine-N(7)-)-methyltransferase.